We begin with the raw amino-acid sequence, 241 residues long: Lipoprotein-releasing system ATP-binding protein LolD 2 (241 aa).

The 236-residue stretch at 6 to 241 folds into the ABC transporter domain; sequence LDAQQLSKSY…YKSYEKSTAV (236 aa). 43–50 is a binding site for ATP; the sequence is GASGSGKT.

Belongs to the ABC transporter superfamily. Lipoprotein translocase (TC 3.A.1.125) family. In terms of assembly, the complex is composed of two ATP-binding proteins (LolD) and two transmembrane proteins (LolC and LolE).

It is found in the cell inner membrane. Its function is as follows. Part of the ABC transporter complex LolCDE involved in the translocation of mature outer membrane-directed lipoproteins, from the inner membrane to the periplasmic chaperone, LolA. Responsible for the formation of the LolA-lipoprotein complex in an ATP-dependent manner. This is Lipoprotein-releasing system ATP-binding protein LolD 2 from Chlorobium chlorochromatii (strain CaD3).